We begin with the raw amino-acid sequence, 356 residues long: Nicotinate-nucleotide--dimethylbenzimidazole phosphoribosyltransferase (356 aa).

The active-site Proton acceptor is the E317.

Belongs to the CobT family. In terms of assembly, homodimer.

The enzyme catalyses 5,6-dimethylbenzimidazole + nicotinate beta-D-ribonucleotide = alpha-ribazole 5'-phosphate + nicotinate + H(+). The protein operates within nucleoside biosynthesis; alpha-ribazole biosynthesis; alpha-ribazole from 5,6-dimethylbenzimidazole: step 1/2. In terms of biological role, catalyzes the synthesis of alpha-ribazole-5'-phosphate from nicotinate mononucleotide (NAMN) and 5,6-dimethylbenzimidazole (DMB). This is Nicotinate-nucleotide--dimethylbenzimidazole phosphoribosyltransferase from Salmonella agona (strain SL483).